Reading from the N-terminus, the 276-residue chain is Shikimate dehydrogenase (NADP(+)) (276 aa).

Shikimate-binding positions include 15 to 17 (SMS) and threonine 63. Lysine 67 (proton acceptor) is an active-site residue. Aspartate 79 is an NADP(+) binding site. The shikimate site is built by asparagine 88 and aspartate 103. Residues 130–134 (GAGGA), 154–159 (NRTLSR), and isoleucine 217 contribute to the NADP(+) site. Tyrosine 219 lines the shikimate pocket. Glycine 240 provides a ligand contact to NADP(+).

Belongs to the shikimate dehydrogenase family. As to quaternary structure, homodimer.

It catalyses the reaction shikimate + NADP(+) = 3-dehydroshikimate + NADPH + H(+). The protein operates within metabolic intermediate biosynthesis; chorismate biosynthesis; chorismate from D-erythrose 4-phosphate and phosphoenolpyruvate: step 4/7. Functionally, involved in the biosynthesis of the chorismate, which leads to the biosynthesis of aromatic amino acids. Catalyzes the reversible NADPH linked reduction of 3-dehydroshikimate (DHSA) to yield shikimate (SA). In Oceanobacillus iheyensis (strain DSM 14371 / CIP 107618 / JCM 11309 / KCTC 3954 / HTE831), this protein is Shikimate dehydrogenase (NADP(+)).